A 205-amino-acid polypeptide reads, in one-letter code: Small ribosomal subunit protein uS5 (205 aa).

The region spanning 49–112 (LEDEVLDIAM…TKAKMNLVKV (64 aa)) is the S5 DRBM domain.

It belongs to the universal ribosomal protein uS5 family. As to quaternary structure, part of the 30S ribosomal subunit. Contacts protein S4.

Functionally, with S4 and S12 plays an important role in translational accuracy. This chain is Small ribosomal subunit protein uS5, found in Methanoregula boonei (strain DSM 21154 / JCM 14090 / 6A8).